A 265-amino-acid polypeptide reads, in one-letter code: uncharacterized protein (265 aa).

Positions 7, 9, 94, 130, 155, and 205 each coordinate a divalent metal cation.

This sequence belongs to the metallo-dependent hydrolases superfamily. TatD-type hydrolase family. Requires a divalent metal cation as cofactor.

This is an uncharacterized protein from Escherichia coli O157:H7.